Reading from the N-terminus, the 31-residue chain is Cytochrome b6-f complex subunit 6 (31 aa).

The helical transmembrane segment at 4-24 (LTSYFGFLLAALTITSVLFIG) threads the bilayer.

The protein belongs to the PetL family. In terms of assembly, the 4 large subunits of the cytochrome b6-f complex are cytochrome b6, subunit IV (17 kDa polypeptide, PetD), cytochrome f and the Rieske protein, while the 4 small subunits are PetG, PetL, PetM and PetN. The complex functions as a dimer.

It localises to the plastid. Its subcellular location is the chloroplast thylakoid membrane. Its function is as follows. Component of the cytochrome b6-f complex, which mediates electron transfer between photosystem II (PSII) and photosystem I (PSI), cyclic electron flow around PSI, and state transitions. PetL is important for photoautotrophic growth as well as for electron transfer efficiency and stability of the cytochrome b6-f complex. This chain is Cytochrome b6-f complex subunit 6, found in Silene conica (Striped corn catchfly).